Reading from the N-terminus, the 332-residue chain is L-lactate dehydrogenase C chain (332 aa).

Residues Gly29–Lys57 and Arg99 contribute to the NAD(+) site. Substrate is bound by residues Arg106, Asn138, and Arg169. Asn138 contributes to the NAD(+) binding site. The active-site Proton acceptor is the His193. Thr248 is a binding site for substrate. Phosphoserine is present on Ser301.

The protein belongs to the LDH/MDH superfamily. LDH family. Homotetramer. Interacts with RABL2/RABL2A; binds preferentially to GTP-bound RABL2.

It is found in the cytoplasm. The catalysed reaction is (S)-lactate + NAD(+) = pyruvate + NADH + H(+). Its pathway is fermentation; pyruvate fermentation to lactate; (S)-lactate from pyruvate: step 1/1. Its function is as follows. Possible role in sperm motility. This chain is L-lactate dehydrogenase C chain (LDHC), found in Sus scrofa (Pig).